The sequence spans 651 residues: UvrABC system protein C (651 aa).

The region spanning Thr-21 to Val-100 is the GIY-YIG domain. Positions Asp-210–Leu-245 constitute a UVR domain.

The protein belongs to the UvrC family. As to quaternary structure, interacts with UvrB in an incision complex.

It localises to the cytoplasm. Functionally, the UvrABC repair system catalyzes the recognition and processing of DNA lesions. UvrC both incises the 5' and 3' sides of the lesion. The N-terminal half is responsible for the 3' incision and the C-terminal half is responsible for the 5' incision. The chain is UvrABC system protein C from Synechococcus sp. (strain CC9311).